The following is a 213-amino-acid chain: Protein-L-isoaspartate O-methyltransferase (213 aa).

The active site involves Ser62.

This sequence belongs to the methyltransferase superfamily. L-isoaspartyl/D-aspartyl protein methyltransferase family.

Its subcellular location is the cytoplasm. The catalysed reaction is [protein]-L-isoaspartate + S-adenosyl-L-methionine = [protein]-L-isoaspartate alpha-methyl ester + S-adenosyl-L-homocysteine. Catalyzes the methyl esterification of L-isoaspartyl residues in peptides and proteins that result from spontaneous decomposition of normal L-aspartyl and L-asparaginyl residues. It plays a role in the repair and/or degradation of damaged proteins. This is Protein-L-isoaspartate O-methyltransferase from Idiomarina loihiensis (strain ATCC BAA-735 / DSM 15497 / L2-TR).